Reading from the N-terminus, the 380-residue chain is Cytochrome b (380 aa).

4 consecutive transmembrane segments (helical) span residues 33-53 (FGSL…FLAM), 77-98 (WLIR…FLHV), 113-133 (WNMG…GYVL), and 178-198 (FFAF…VHLL). The heme b site is built by H83 and H97. Heme b contacts are provided by H182 and H196. H201 is an a ubiquinone binding site. The next 4 membrane-spanning stretches (helical) occupy residues 226-246 (IKDF…TLFF), 288-308 (LGGV…PLLH), 320-340 (ITQT…WIGG), and 347-367 (FIII…ILMP).

Belongs to the cytochrome b family. As to quaternary structure, the cytochrome bc1 complex contains 11 subunits: 3 respiratory subunits (MT-CYB, CYC1 and UQCRFS1), 2 core proteins (UQCRC1 and UQCRC2) and 6 low-molecular weight proteins (UQCRH/QCR6, UQCRB/QCR7, UQCRQ/QCR8, UQCR10/QCR9, UQCR11/QCR10 and a cleavage product of UQCRFS1). This cytochrome bc1 complex then forms a dimer. Requires heme b as cofactor.

It localises to the mitochondrion inner membrane. Its function is as follows. Component of the ubiquinol-cytochrome c reductase complex (complex III or cytochrome b-c1 complex) that is part of the mitochondrial respiratory chain. The b-c1 complex mediates electron transfer from ubiquinol to cytochrome c. Contributes to the generation of a proton gradient across the mitochondrial membrane that is then used for ATP synthesis. The polypeptide is Cytochrome b (MT-CYB) (Microtus guentheri (Gunther's vole)).